The chain runs to 356 residues: Protein-glutamate methylesterase/protein-glutamine glutaminase 2 (356 aa).

Residues K7–T124 form the Response regulatory domain. D58 carries the 4-aspartylphosphate modification. Residues L157 to Y349 form the CheB-type methylesterase domain. Residues S169, H195, and D291 contribute to the active site.

The protein belongs to the CheB family. Phosphorylated by CheA. Phosphorylation of the N-terminal regulatory domain activates the methylesterase activity.

The protein localises to the cytoplasm. The enzyme catalyses [protein]-L-glutamate 5-O-methyl ester + H2O = L-glutamyl-[protein] + methanol + H(+). It catalyses the reaction L-glutaminyl-[protein] + H2O = L-glutamyl-[protein] + NH4(+). Its function is as follows. Involved in chemotaxis. Part of a chemotaxis signal transduction system that modulates chemotaxis in response to various stimuli. Catalyzes the demethylation of specific methylglutamate residues introduced into the chemoreceptors (methyl-accepting chemotaxis proteins or MCP) by CheR. Also mediates the irreversible deamidation of specific glutamine residues to glutamic acid. This Cupriavidus pinatubonensis (strain JMP 134 / LMG 1197) (Cupriavidus necator (strain JMP 134)) protein is Protein-glutamate methylesterase/protein-glutamine glutaminase 2.